Reading from the N-terminus, the 513-residue chain is Na(+)/H(+) antiporter NhaB (513 aa).

The next 11 membrane-spanning stretches (helical) occupy residues 23-43 (LALIIFLILNPLIFIISPFVA), 52-72 (IFTLAMALKCYPLLPGGLLAI), 97-117 (LLLMFMVAGIYFMKQLLLFIF), 144-164 (FLDALTVVAVVISVAVGFYGI), 202-222 (LMMHAGVGTALGGVMTMVGEP), 238-258 (FFLRMSPVTVPVLICGLLTCL), 303-323 (AIIGVWLVTALALHLAEVGLI), 348-368 (TESLPFTALLTVFFSVVAVII), 391-411 (LFYIFNGLLSSISDNVFVGTI), 447-467 (ATPNGQAAFLFLLTSALAPLI), and 475-495 (VWMALPYTLVLTLVGLLCVEF).

It belongs to the NhaB Na(+)/H(+) (TC 2.A.34) antiporter family.

Its subcellular location is the cell inner membrane. The catalysed reaction is 2 Na(+)(in) + 3 H(+)(out) = 2 Na(+)(out) + 3 H(+)(in). Na(+)/H(+) antiporter that extrudes sodium in exchange for external protons. The chain is Na(+)/H(+) antiporter NhaB from Escherichia coli (strain SMS-3-5 / SECEC).